The sequence spans 423 residues: Diaminobutyrate--2-oxoglutarate transaminase (423 aa).

Residue lysine 271 is modified to N6-(pyridoxal phosphate)lysine.

Belongs to the class-III pyridoxal-phosphate-dependent aminotransferase family. It depends on pyridoxal 5'-phosphate as a cofactor.

The enzyme catalyses L-2,4-diaminobutanoate + 2-oxoglutarate = L-aspartate 4-semialdehyde + L-glutamate. It participates in amine and polyamine biosynthesis; ectoine biosynthesis; L-ectoine from L-aspartate 4-semialdehyde: step 1/3. In terms of biological role, catalyzes reversively the conversion of L-aspartate beta-semialdehyde (ASA) to L-2,4-diaminobutyrate (DABA) by transamination with L-glutamate. The polypeptide is Diaminobutyrate--2-oxoglutarate transaminase (ectB) (Streptomyces coelicolor (strain ATCC BAA-471 / A3(2) / M145)).